A 176-amino-acid polypeptide reads, in one-letter code: Large ribosomal subunit protein uL10 (176 aa).

This sequence belongs to the universal ribosomal protein uL10 family. Part of the ribosomal stalk of the 50S ribosomal subunit. The N-terminus interacts with L11 and the large rRNA to form the base of the stalk. The C-terminus forms an elongated spine to which L12 dimers bind in a sequential fashion forming a multimeric L10(L12)X complex.

Its function is as follows. Forms part of the ribosomal stalk, playing a central role in the interaction of the ribosome with GTP-bound translation factors. This Leuconostoc citreum (strain KM20) protein is Large ribosomal subunit protein uL10.